An 82-amino-acid chain; its full sequence is EMBRYO SURROUNDING FACTOR 1.2 (82 aa).

An N-terminal signal peptide occupies residues 1–23 (MKSQTVLISIFIFSFFALHQCMQ). Intrachain disulfides connect C40–C56, C45–C77, C54–C71, and C57–C64.

This sequence belongs to the MEG family. Expressed exclusively in ovule embryo sacs and in early developing endosperms.

Functionally, maternally-contributed central cell peptide regulating suspensor development and correct auxin distribution in early developing embryos. This is EMBRYO SURROUNDING FACTOR 1.2 (ESF1.2) from Arabidopsis thaliana (Mouse-ear cress).